A 513-amino-acid polypeptide reads, in one-letter code: Cobyric acid synthase (513 aa).

One can recognise a GATase cobBQ-type domain in the interval 270–470 (RLRIAIVAYP…THGLFESPAV (201 aa)). The Nucleophile role is filled by Cys351. The active site involves His462.

It belongs to the CobB/CobQ family. CobQ subfamily.

Its pathway is cofactor biosynthesis; adenosylcobalamin biosynthesis. Functionally, catalyzes amidations at positions B, D, E, and G on adenosylcobyrinic A,C-diamide. NH(2) groups are provided by glutamine, and one molecule of ATP is hydrogenolyzed for each amidation. The sequence is that of Cobyric acid synthase from Leptothrix cholodnii (strain ATCC 51168 / LMG 8142 / SP-6) (Leptothrix discophora (strain SP-6)).